The chain runs to 160 residues: 2-amino-4-hydroxy-6-hydroxymethyldihydropteridine pyrophosphokinase (160 aa).

The protein belongs to the HPPK family.

It catalyses the reaction 6-hydroxymethyl-7,8-dihydropterin + ATP = (7,8-dihydropterin-6-yl)methyl diphosphate + AMP + H(+). Its pathway is cofactor biosynthesis; tetrahydrofolate biosynthesis; 2-amino-4-hydroxy-6-hydroxymethyl-7,8-dihydropteridine diphosphate from 7,8-dihydroneopterin triphosphate: step 4/4. Catalyzes the transfer of pyrophosphate from adenosine triphosphate (ATP) to 6-hydroxymethyl-7,8-dihydropterin, an enzymatic step in folate biosynthesis pathway. The chain is 2-amino-4-hydroxy-6-hydroxymethyldihydropteridine pyrophosphokinase (folK) from Aquifex aeolicus (strain VF5).